A 292-amino-acid polypeptide reads, in one-letter code: NAD kinase (292 aa).

D73 serves as the catalytic Proton acceptor. NAD(+) contacts are provided by residues 73-74 (DG), 147-148 (NE), H158, R175, D177, 188-193 (TAYSLS), and Q247.

Belongs to the NAD kinase family. Requires a divalent metal cation as cofactor.

The protein localises to the cytoplasm. The enzyme catalyses NAD(+) + ATP = ADP + NADP(+) + H(+). Involved in the regulation of the intracellular balance of NAD and NADP, and is a key enzyme in the biosynthesis of NADP. Catalyzes specifically the phosphorylation on 2'-hydroxyl of the adenosine moiety of NAD to yield NADP. The protein is NAD kinase of Salmonella dublin (strain CT_02021853).